The sequence spans 267 residues: 4-hydroxy-tetrahydrodipicolinate reductase (267 aa).

Residue 8–13 (GANGRM) participates in NAD(+) binding. NADP(+) is bound at residue Arg35. Residues 98 to 100 (GTT) and 122 to 125 (AANY) each bind NAD(+). His155 acts as the Proton donor/acceptor in catalysis. A (S)-2,3,4,5-tetrahydrodipicolinate-binding site is contributed by His156. Lys159 functions as the Proton donor in the catalytic mechanism. Position 165-166 (165-166 (GT)) interacts with (S)-2,3,4,5-tetrahydrodipicolinate.

It belongs to the DapB family.

The protein resides in the cytoplasm. The enzyme catalyses (S)-2,3,4,5-tetrahydrodipicolinate + NAD(+) + H2O = (2S,4S)-4-hydroxy-2,3,4,5-tetrahydrodipicolinate + NADH + H(+). The catalysed reaction is (S)-2,3,4,5-tetrahydrodipicolinate + NADP(+) + H2O = (2S,4S)-4-hydroxy-2,3,4,5-tetrahydrodipicolinate + NADPH + H(+). The protein operates within amino-acid biosynthesis; L-lysine biosynthesis via DAP pathway; (S)-tetrahydrodipicolinate from L-aspartate: step 4/4. Its function is as follows. Catalyzes the conversion of 4-hydroxy-tetrahydrodipicolinate (HTPA) to tetrahydrodipicolinate. The chain is 4-hydroxy-tetrahydrodipicolinate reductase from Pseudoalteromonas atlantica (strain T6c / ATCC BAA-1087).